The sequence spans 353 residues: Photosystem II D2 protein (353 aa).

The residue at position 2 (threonine 2) is an N-acetylthreonine. The residue at position 2 (threonine 2) is a Phosphothreonine. Residues 41 to 61 (CAYFALGGWFTGTTFVTSWYT) traverse the membrane as a helical segment. Histidine 118 provides a ligand contact to chlorophyll a. Residues 125-141 (GFMLRQFELARSVQLRP) traverse the membrane as a helical segment. The pheophytin a site is built by glutamine 130 and asparagine 143. A helical membrane pass occupies residues 153–166 (VFVSVFLIYPLGQS). Position 198 (histidine 198) interacts with chlorophyll a. A helical transmembrane segment spans residues 208–228 (AALLCAIHGATVENTLFEDGD). Residues histidine 215 and phenylalanine 262 each coordinate a plastoquinone. Histidine 215 provides a ligand contact to Fe cation. Fe cation is bound at residue histidine 269. The helical transmembrane segment at 279 to 295 (GLWMSALGVVGLALNLR) threads the bilayer.

It belongs to the reaction center PufL/M/PsbA/D family. As to quaternary structure, PSII is composed of 1 copy each of membrane proteins PsbA, PsbB, PsbC, PsbD, PsbE, PsbF, PsbH, PsbI, PsbJ, PsbK, PsbL, PsbM, PsbT, PsbX, PsbY, PsbZ, Psb30/Ycf12, at least 3 peripheral proteins of the oxygen-evolving complex and a large number of cofactors. It forms dimeric complexes. The D1/D2 heterodimer binds P680, chlorophylls that are the primary electron donor of PSII, and subsequent electron acceptors. It shares a non-heme iron and each subunit binds pheophytin, quinone, additional chlorophylls, carotenoids and lipids. There is also a Cl(-1) ion associated with D1 and D2, which is required for oxygen evolution. The PSII complex binds additional chlorophylls, carotenoids and specific lipids. serves as cofactor.

It localises to the plastid. It is found in the chloroplast thylakoid membrane. The catalysed reaction is 2 a plastoquinone + 4 hnu + 2 H2O = 2 a plastoquinol + O2. Photosystem II (PSII) is a light-driven water:plastoquinone oxidoreductase that uses light energy to abstract electrons from H(2)O, generating O(2) and a proton gradient subsequently used for ATP formation. It consists of a core antenna complex that captures photons, and an electron transfer chain that converts photonic excitation into a charge separation. The D1/D2 (PsbA/PsbD) reaction center heterodimer binds P680, the primary electron donor of PSII as well as several subsequent electron acceptors. D2 is needed for assembly of a stable PSII complex. This is Photosystem II D2 protein from Ceratophyllum demersum (Rigid hornwort).